A 1169-amino-acid polypeptide reads, in one-letter code: Pesticidal crystal protein Cry1Gb (1169 aa).

This sequence belongs to the delta endotoxin family.

In terms of biological role, promotes colloidosmotic lysis by binding to the midgut epithelial cells of lepidopteran larvae. Toxic to Pieris rapae. The polypeptide is Pesticidal crystal protein Cry1Gb (cry1Gb) (Bacillus thuringiensis subsp. wuhanensis).